We begin with the raw amino-acid sequence, 86 residues long: MIOREX complex component 7 (86 aa).

In terms of assembly, associates with the mitochondrial ribosome.

The protein localises to the mitochondrion. In terms of biological role, component of MIOREX complexes, large expressome-like assemblies of ribosomes with factors involved in all the steps of post-transcriptional gene expression. The chain is MIOREX complex component 7 from Saccharomyces cerevisiae (strain ATCC 204508 / S288c) (Baker's yeast).